Reading from the N-terminus, the 444-residue chain is N-succinylarginine dihydrolase (444 aa).

Residues 19-28, asparagine 110, and 137-138 each bind substrate; these read AGLSFGNVAS and HR. Glutamate 174 is a catalytic residue. A substrate-binding site is contributed by arginine 214. Histidine 250 is a catalytic residue. Residues aspartate 252 and asparagine 362 each coordinate substrate. Catalysis depends on cysteine 368, which acts as the Nucleophile.

The protein belongs to the succinylarginine dihydrolase family. In terms of assembly, homodimer.

The enzyme catalyses N(2)-succinyl-L-arginine + 2 H2O + 2 H(+) = N(2)-succinyl-L-ornithine + 2 NH4(+) + CO2. It functions in the pathway amino-acid degradation; L-arginine degradation via AST pathway; L-glutamate and succinate from L-arginine: step 2/5. Functionally, catalyzes the hydrolysis of N(2)-succinylarginine into N(2)-succinylornithine, ammonia and CO(2). The chain is N-succinylarginine dihydrolase from Shewanella baltica (strain OS185).